The chain runs to 172 residues: Peptidyl-prolyl cis-trans isomerase (172 aa).

Residues 7-170 (FFDMAIAGNP…RPVTIADCGQ (164 aa)) enclose the PPIase cyclophilin-type domain.

Belongs to the cyclophilin-type PPIase family. In terms of tissue distribution, expressed in meristematic tissues, with higher levels in nodules.

The protein resides in the cytoplasm. The catalysed reaction is [protein]-peptidylproline (omega=180) = [protein]-peptidylproline (omega=0). Binds cyclosporin A (CsA). CsA mediates some of its effects via an inhibitory action on PPIase. Functionally, PPIases accelerate the folding of proteins. It catalyzes the cis-trans isomerization of proline imidic peptide bonds in oligopeptides. The sequence is that of Peptidyl-prolyl cis-trans isomerase from Lupinus luteus (European yellow lupine).